The following is a 569-amino-acid chain: Proline--tRNA ligase (569 aa).

Belongs to the class-II aminoacyl-tRNA synthetase family. ProS type 1 subfamily. In terms of assembly, homodimer.

The protein localises to the cytoplasm. It carries out the reaction tRNA(Pro) + L-proline + ATP = L-prolyl-tRNA(Pro) + AMP + diphosphate. Functionally, catalyzes the attachment of proline to tRNA(Pro) in a two-step reaction: proline is first activated by ATP to form Pro-AMP and then transferred to the acceptor end of tRNA(Pro). As ProRS can inadvertently accommodate and process non-cognate amino acids such as alanine and cysteine, to avoid such errors it has two additional distinct editing activities against alanine. One activity is designated as 'pretransfer' editing and involves the tRNA(Pro)-independent hydrolysis of activated Ala-AMP. The other activity is designated 'posttransfer' editing and involves deacylation of mischarged Ala-tRNA(Pro). The misacylated Cys-tRNA(Pro) is not edited by ProRS. The sequence is that of Proline--tRNA ligase from Shewanella loihica (strain ATCC BAA-1088 / PV-4).